Here is a 204-residue protein sequence, read N- to C-terminus: 8-oxoguanine DNA glycosylase/AP lyase (204 aa).

Active-site residues include Lys128 and Asp146.

The protein belongs to the type-2 OGG1 family.

The catalysed reaction is 2'-deoxyribonucleotide-(2'-deoxyribose 5'-phosphate)-2'-deoxyribonucleotide-DNA = a 3'-end 2'-deoxyribonucleotide-(2,3-dehydro-2,3-deoxyribose 5'-phosphate)-DNA + a 5'-end 5'-phospho-2'-deoxyribonucleoside-DNA + H(+). In terms of biological role, catalyzes the excision of an oxidatively damaged form of guanine (7,8-dihydro-8-oxoguanine = 8-oxoG) from DNA. Also cleaves the DNA backbone at apurinic/apyrimidinic sites (AP sites). The protein is 8-oxoguanine DNA glycosylase/AP lyase of Sulfurisphaera tokodaii (strain DSM 16993 / JCM 10545 / NBRC 100140 / 7) (Sulfolobus tokodaii).